A 229-amino-acid chain; its full sequence is C-&gt;U-editing enzyme APOBEC-1 (229 aa).

The 125-residue stretch at 10 to 134 (VDPTLRRRIE…PRNRQGLRDL (125 aa)) folds into the CMP/dCMP-type deaminase domain. Residue His-61 participates in Zn(2+) binding. Catalysis depends on Glu-63, which acts as the Proton donor. Residues Cys-93 and Cys-96 each contribute to the Zn(2+) site.

This sequence belongs to the cytidine and deoxycytidylate deaminase family. In terms of assembly, homodimer. Interacts with A1CF; form an mRNA editing complex. Interacts with RBM47; form an mRNA editing complex. Found in a complex with CELF2/CUGBP2 and A1CF. Interacts with HNRPAB. Interacts with SYNCRIP. It depends on Zn(2+) as a cofactor. Expressed in the liver as well as small intestine.

The protein resides in the cytoplasm. It is found in the nucleus. The enzyme catalyses a cytidine in mRNA + H2O + H(+) = a uridine in mRNA + NH4(+). The catalysed reaction is cytidine(6666) in apoB mRNA + H2O + H(+) = uridine(6666) in apoB mRNA + NH4(+). Its function is as follows. Cytidine deaminase catalyzing the cytidine to uridine postranscriptional editing of a variety of mRNAs. Form complexes with cofactors that confer differential editing activity and selectivity. Responsible for the postranscriptional editing of a CAA codon for Gln to a UAA codon for stop in the apolipoprotein B mRNA. Also involved in CGA (Arg) to UGA (Stop) editing in the NF1 mRNA. May also play a role in the epigenetic regulation of gene expression by participating in DNA demethylation. The chain is C-&gt;U-editing enzyme APOBEC-1 from Rattus norvegicus (Rat).